The primary structure comprises 387 residues: Chlorophyll synthase, chloroplastic (387 aa).

The transit peptide at 1 to 57 directs the protein to the chloroplast; it reads MTSILNTVSTIHSSRVTSVDRVGVLSLRNSDSVEFTRRRSGFSTLIYESPGRRFVVR. Residues 62–81 are disordered; the sequence is DTDKVKSQTPDKAPAGGSSI. The next 7 membrane-spanning stretches (helical) occupy residues 182–202, 210–230, 241–261, 266–286, 311–331, 336–356, and 364–384; these read VITQ…ILDV, TVFY…APPL, FALG…LFGT, VVVL…VNDF, WICV…LLAS, YALA…KYFL, and VKYQ…TALA.

It belongs to the UbiA prenyltransferase family. Chlorophyll synthase subfamily. Low level in flower buds, flowers, stems, leaves, greening cotyledons and immature siliques, but not in mature siliques or seeds.

It is found in the plastid. It localises to the chloroplast membrane. It carries out the reaction phytyl diphosphate + chlorophyllide a + H(+) = chlorophyll a + diphosphate. It participates in porphyrin-containing compound metabolism; chlorophyll biosynthesis. Its function is as follows. Involved in one of the last steps of the biosynthesis of chlorophyll a. Catalyzes the esterification of chlorophillide a or b with a preference for geranylgeranyldiphosphate (GGPP) rather than for phytyldiphosphate (PhyPP). This chain is Chlorophyll synthase, chloroplastic (CHLG), found in Arabidopsis thaliana (Mouse-ear cress).